A 4114-amino-acid polypeptide reads, in one-letter code: Ferrichrome siderophore peptide synthetase (4114 aa).

4 Carrier domains span residues 797–874 (DPAT…QSSG), 1947–2021 (TDSE…IDKL), 3020–3093 (TQSE…MQSS), and 3574–3650 (QALS…SQTN). Serine 835, serine 1982, serine 3054, and serine 3611 each carry O-(pantetheine 4'-phosphoryl)serine. The interval 4040–4061 (LDYSHHSQHSTHDRTPPSTPHV) is disordered. Residues 4041–4054 (DYSHHSQHSTHDRT) are compositionally biased toward basic and acidic residues.

It belongs to the ATP-dependent AMP-binding enzyme family. Pantetheine 4'-phosphate is required as a cofactor.

The protein operates within siderophore biosynthesis; ferrichrome biosynthesis. Multidomain peptide synthetase involved in ferrichrome biosynthesis. In Mycosarcoma maydis (Corn smut fungus), this protein is Ferrichrome siderophore peptide synthetase (SID2).